The following is an 82-amino-acid chain: Turripeptide Gsp9.2 (82 aa).

An N-terminal signal peptide occupies residues 1 to 23 (MMAKLMITVMMVLLLSLQQGADG). Positions 24-46 (RSERWRKNQMAASSIMRNLITAR) are excised as a propeptide. A 4-hydroxyproline mark is found at Pro-49 and Pro-50. 3 disulfides stabilise this stretch: Cys-53-Cys-68, Cys-58-Cys-72, and Cys-64-Cys-79. Glu-56 is subject to 4-carboxyglutamate.

Belongs to the Pg turripeptide superfamily. As to expression, expressed by the venom duct.

It is found in the secreted. This Gemmula speciosa (Splendid gem-turris) protein is Turripeptide Gsp9.2.